The chain runs to 629 residues: G1-specific transcription factors activator MSA1 (629 aa).

A compositionally biased stretch (basic residues) spans 1 to 11 (MDKSMIKKRGR). Disordered stretches follow at residues 1 to 60 (MDKS…KRRL), 83 to 106 (STPT…NDSY), 217 to 286 (YCDT…SSLQ), 455 to 485 (VQVQ…NMNS), and 586 to 629 (PNLH…IDDQ). Polar residues predominate over residues 21–37 (PLQSPMAHSSMQVQKQG). The segment covering 245–260 (IETSASPIGSARNNNI) has biased composition (polar residues). Low complexity-rich tracts occupy residues 261 to 277 (LLSQ…QLKP) and 455 to 475 (VQVQ…RQFQ). Phosphoserine is present on Ser268. Residues 614–629 (KQDDARTALKRLIDDQ) are compositionally biased toward basic and acidic residues.

As to quaternary structure, interacts with transcription complexes SCB-binding factor (SBF) and MCB-binding factor (MBF) at their target promoters. Interacts with MBP1 and SWI6. Phosphorylated by CDC28.

Functionally, activator of G1-specific transcription factors, MBF and SBF. Promotes both the timing of G1-specific gene transcription and cell cycle initiation. Associates with SBF- and MBF-regulated target promoters and this binding is maximal during the G1 phase, prior to maximum budding. Affects cell cycle initiation by advancing the timing of transcription of G1-specific genes. Overexpression advances the timing of SBF-dependent transcription and budding. Depletion delays both indicators of cell cycle initiation. In Saccharomyces cerevisiae (strain ATCC 204508 / S288c) (Baker's yeast), this protein is G1-specific transcription factors activator MSA1 (MSA1).